We begin with the raw amino-acid sequence, 158 residues long: NAD(P)H-quinone oxidoreductase subunit J, chloroplastic (158 aa).

The protein belongs to the complex I 30 kDa subunit family. In terms of assembly, NDH is composed of at least 16 different subunits, 5 of which are encoded in the nucleus.

Its subcellular location is the plastid. It localises to the chloroplast thylakoid membrane. The enzyme catalyses a plastoquinone + NADH + (n+1) H(+)(in) = a plastoquinol + NAD(+) + n H(+)(out). The catalysed reaction is a plastoquinone + NADPH + (n+1) H(+)(in) = a plastoquinol + NADP(+) + n H(+)(out). Its function is as follows. NDH shuttles electrons from NAD(P)H:plastoquinone, via FMN and iron-sulfur (Fe-S) centers, to quinones in the photosynthetic chain and possibly in a chloroplast respiratory chain. The immediate electron acceptor for the enzyme in this species is believed to be plastoquinone. Couples the redox reaction to proton translocation, and thus conserves the redox energy in a proton gradient. This chain is NAD(P)H-quinone oxidoreductase subunit J, chloroplastic, found in Solanum bulbocastanum (Wild potato).